Here is a 1122-residue protein sequence, read N- to C-terminus: Desmoglein-2 (1122 aa).

An N-terminal signal peptide occupies residues Met-1–Gly-28. Residues Leu-29–Arg-54 constitute a propeptide that is removed on maturation. Cadherin domains are found at residues Ala-55–Phe-164, Thr-165–Val-277, Glu-278–Val-398, and Val-397–Leu-504. The Extracellular segment spans residues Ala-55–Ala-618. N-linked (GlcNAc...) asparagine glycosylation is present at Asn-117. N-linked (GlcNAc...) asparagine glycosylation is found at Asn-314, Asn-467, and Asn-519. The chain crosses the membrane as a helical span at residues Ala-619–Ile-639. Topologically, residues Cys-640–Ser-1122 are cytoplasmic. A phosphoserine mark is found at Ser-685, Ser-706, Ser-709, and Ser-729. Thr-808 is modified (phosphothreonine). Residues Ser-810, Ser-814, and Ser-819 each carry the phosphoserine modification. 6 Desmoglein repeat repeats span residues Ala-885–Val-916, Ser-917–Lys-945, Gly-946–Tyr-971, Ala-972–Ile-995, Gln-996–Ser-1024, and Ile-1025–Leu-1055. The segment at Glu-913 to Ala-932 is disordered. Residues Ser-914–Val-924 are compositionally biased toward low complexity. A disordered region spans residues Leu-1089–Ser-1122. Over residues Pro-1100–Ser-1122 the composition is skewed to polar residues. Ser-1122 carries the phosphoserine modification.

As to quaternary structure, interacts with PKP2. Interacts with CTNNB1; the interaction promotes localization of CTNNB1 at cell junctions thus reducing its nuclear localization and subsequent transcription of CTNNB1/TCF-target genes. Palmitoylated by ZDHHC5 at the plasma membrane. In terms of tissue distribution, expressed in undifferentiated pluripotent stem cells, expression decreases during differentiation (at protein level). Expressed by embryonic stem cells, expression is reduced during differentiation (at protein level). Expressed at the apical-lateral cell membrane of kidney tubular epithelial cells (at protein level). Expressed in epidermis and heart (at protein level). Expressed in the brain, spleen, lung, liver skeletal muscle, kidney and testis.

It localises to the cell membrane. It is found in the cell junction. The protein resides in the desmosome. The protein localises to the cytoplasm. A component of desmosome cell-cell junctions which are required for positive regulation of cellular adhesion. Involved in the interaction of plaque proteins and intermediate filaments mediating cell-cell adhesion. Required for proliferation and viability of embryonic stem cells in the blastocyst, thereby crucial for progression of post-implantation embryonic development. Maintains pluripotency by regulating epithelial to mesenchymal transition/mesenchymal to epithelial transition (EMT/MET) via interacting with and sequestering CTNNB1 to sites of cell-cell contact, thereby reducing translocation of CTNNB1 to the nucleus and subsequent transcription of CTNNB1/TCF-target genes. Promotes pluripotency and the multi-lineage differentiation potential of hematopoietic stem cells. Plays a role in endothelial cell sprouting and elongation via mediating the junctional-association of cortical actin fibers and CDH5. Plays a role in limiting inflammatory infiltration and the apoptotic response to injury in kidney tubular epithelial cells, potentially via its role in maintaining cell-cell adhesion and the epithelial barrier. In Mus musculus (Mouse), this protein is Desmoglein-2 (Dsg2).